Reading from the N-terminus, the 832-residue chain is Armadillo segment polarity protein (832 aa).

The segment covering 1 to 20 (MSYQMPQNRTMSHNPYNSSD) has biased composition (polar residues). Residues 1–24 (MSYQMPQNRTMSHNPYNSSDMPMP) are disordered. ARM repeat units follow at residues 146–185 (NYQD…QLSK), 188–228 (ASRH…NLSH), 230–269 (RQGL…NLLL), 272–311 (DGSK…ILAY), 356–395 (SSNK…NLSD), 397–434 (ATKV…NLTC), 483–524 (SESA…NLAL), 594–634 (ELNR…ELAV), and 636–675 (KEVA…KMSE). The tract at residues 721–832 (AYEGLYGQGP…QVAAWYDTDL (112 aa)) is disordered. Low complexity predominate over residues 767-777 (PAGSNPNAGNN).

Belongs to the beta-catenin family.

It is found in the cytoplasm. The protein resides in the cell membrane. The protein localises to the cell junction. It localises to the adherens junction. In terms of biological role, may associate with CadN and participate in the transmission of developmental information. Can associate with alpha-catenin. Accumulates through wg signaling; arm function in wg signal transduction is required early in development for determination of neuroblast fate. Arm and Abl proteins function cooperatively at adherens junctions in both the CNS and epidermis. The sequence is that of Armadillo segment polarity protein from Aedes aegypti (Yellowfever mosquito).